The sequence spans 213 residues: Thymidylate kinase (213 aa).

ATP is bound at residue 7 to 14 (GMDGSGKT).

The protein belongs to the thymidylate kinase family.

The enzyme catalyses dTMP + ATP = dTDP + ADP. In terms of biological role, phosphorylation of dTMP to form dTDP in both de novo and salvage pathways of dTTP synthesis. The protein is Thymidylate kinase of Mycoplasma capricolum subsp. capricolum (strain California kid / ATCC 27343 / NCTC 10154).